Consider the following 146-residue polypeptide: Angiogenin (146 aa).

The signal sequence occupies residues 1-24 (MVMGLGLFLLVFMLGLGLTPPTLA). Pyrrolidone carboxylic acid is present on Gln-25. His-37 functions as the Proton acceptor in the catalytic mechanism. Arg-45 lines the tRNA pocket. 3 cysteine pairs are disulfide-bonded: Cys-50/Cys-105, Cys-63/Cys-116, and Cys-81/Cys-131. The short motif at 55-59 (RRRGL) is the Nucleolar localization signal element. 2 residues coordinate tRNA: Cys-105 and Ile-127. His-138 acts as the Proton donor in catalysis.

This sequence belongs to the pancreatic ribonuclease family. As to quaternary structure, homodimer. Interacts with RNH1; inhibiting ANG ribonuclease activity. Interacts with PCNA.

It localises to the secreted. The protein resides in the nucleus. It is found in the nucleolus. The protein localises to the cytoplasm. Its subcellular location is the stress granule. Has weak tRNA ribonuclease activity by itself due to partial autoinhibition by its C-terminus, which folds into a short alpha-helix that partially occludes the substrate-binding site. In absence of stress, the ribonuclease activity is inhibited by RNH1 in the cytoplasm. In response to stress, dissociates from RNH1 in the cytoplasm and associates with cytoplasmic ribosomes with vacant A-sites: ribosomes directly activate the tRNA ribonuclease activity of ANG by refolding the C-terminal alpha-helix. In response to stress, the angiogenic activity of ANG is inhibited by RNH1 in the nucleus. Its function is as follows. Secreted ribonuclease that can either promote or restrict cell proliferation of target cells, depending on the context. Endocytosed in target cells via its receptor PLXNB2 and translocates to the cytoplasm or nucleus. Under stress conditions, localizes to the cytoplasm and promotes the assembly of stress granules (SGs): specifically cleaves a subset of tRNAs within anticodon loops to produce tRNA-derived stress-induced fragments (tiRNAs), resulting in translation repression and inhibition of cell proliferation. tiRNas also prevent formation of apoptosome, thereby promoting cell survival. Preferentially cleaves RNAs between a pyrimidine and an adenosine residue, suggesting that it cleaves the anticodon loop of tRNA(Ala) (32-UUAGCAU-38) after positions 33 and 36. Cleaves a subset of tRNAs, including tRNA(Ala), tRNA(Glu), tRNA(Gly), tRNA(Lys), tRNA(Val), tRNA(His), tRNA(Asp) and tRNA(Sec). Under growth conditions and in differentiated cells, translocates to the nucleus and stimulates ribosomal RNA (rRNA) transcription, including that containing the initiation site sequences of 45S rRNA, thereby promoting cell growth and proliferation. Angiogenin induces vascularization of normal and malignant tissues via its ability to promote rRNA transcription. Involved in hematopoietic stem and progenitor cell (HSPC) growth and survival by promoting rRNA transcription in growth conditions and inhibiting translation in response to stress, respectively. Mediates the crosstalk between myeloid and intestinal epithelial cells to protect the intestinal epithelial barrier integrity: secreted by myeloid cells and promotes intestinal epithelial cells proliferation and survival. Also mediates osteoclast-endothelial cell crosstalk in growing bone: produced by osteoclasts and protects the neighboring vascular cells against senescence by promoting rRNA transcription. In Rhinopithecus avunculus (Tonkin snub-nosed monkey), this protein is Angiogenin (ANG).